A 314-amino-acid polypeptide reads, in one-letter code: Methionyl-tRNA formyltransferase (314 aa).

112-115 is a binding site for (6S)-5,6,7,8-tetrahydrofolate; that stretch reads SLLP.

This sequence belongs to the Fmt family.

It catalyses the reaction L-methionyl-tRNA(fMet) + (6R)-10-formyltetrahydrofolate = N-formyl-L-methionyl-tRNA(fMet) + (6S)-5,6,7,8-tetrahydrofolate + H(+). Attaches a formyl group to the free amino group of methionyl-tRNA(fMet). The formyl group appears to play a dual role in the initiator identity of N-formylmethionyl-tRNA by promoting its recognition by IF2 and preventing the misappropriation of this tRNA by the elongation apparatus. This is Methionyl-tRNA formyltransferase from Legionella pneumophila (strain Paris).